Consider the following 254-residue polypeptide: UPF0246 protein CPE2152 (254 aa).

The protein belongs to the UPF0246 family.

This is UPF0246 protein CPE2152 from Clostridium perfringens (strain 13 / Type A).